A 328-amino-acid polypeptide reads, in one-letter code: DNA repair and recombination protein RadA (328 aa).

118 to 125 (GEYGSGKT) lines the ATP pocket.

It belongs to the eukaryotic RecA-like protein family.

Its function is as follows. Involved in DNA repair and in homologous recombination. Binds and assemble on single-stranded DNA to form a nucleoprotein filament. Hydrolyzes ATP in a ssDNA-dependent manner and promotes DNA strand exchange between homologous DNA molecules. The protein is DNA repair and recombination protein RadA of Desulfurococcus amylolyticus (strain DSM 18924 / JCM 16383 / VKM B-2413 / 1221n) (Desulfurococcus kamchatkensis).